A 293-amino-acid chain; its full sequence is Capsid protein (293 aa).

The segment at 1–39 is disordered; it reads MPPKPDPSSSGEAPQAMQPAPPPRAEGHMYAQPEGPGQN.

Belongs to the potexviruses coat protein family.

The protein localises to the virion. Required for genome encapsidation. Forms ribonucleoprotein complexes along with TGB1 helicase and viral RNA. The protein is Capsid protein of Solanum tuberosum (Potato).